Reading from the N-terminus, the 390-residue chain is Nicotinate phosphoribosyltransferase (390 aa).

His211 is subject to Phosphohistidine; by autocatalysis.

It belongs to the NAPRTase family. In terms of processing, transiently phosphorylated on a His residue during the reaction cycle. Phosphorylation strongly increases the affinity for substrates and increases the rate of nicotinate D-ribonucleotide production. Dephosphorylation regenerates the low-affinity form of the enzyme, leading to product release.

It carries out the reaction nicotinate + 5-phospho-alpha-D-ribose 1-diphosphate + ATP + H2O = nicotinate beta-D-ribonucleotide + ADP + phosphate + diphosphate. It participates in cofactor biosynthesis; NAD(+) biosynthesis; nicotinate D-ribonucleotide from nicotinate: step 1/1. Its function is as follows. Catalyzes the synthesis of beta-nicotinate D-ribonucleotide from nicotinate and 5-phospho-D-ribose 1-phosphate at the expense of ATP. The chain is Nicotinate phosphoribosyltransferase from Chromohalobacter salexigens (strain ATCC BAA-138 / DSM 3043 / CIP 106854 / NCIMB 13768 / 1H11).